A 471-amino-acid polypeptide reads, in one-letter code: N-succinylglutamate 5-semialdehyde dehydrogenase (471 aa).

207-212 contacts NAD(+); it reads GSAHAG. Catalysis depends on residues E230 and C264.

It belongs to the aldehyde dehydrogenase family. AstD subfamily.

It catalyses the reaction N-succinyl-L-glutamate 5-semialdehyde + NAD(+) + H2O = N-succinyl-L-glutamate + NADH + 2 H(+). It participates in amino-acid degradation; L-arginine degradation via AST pathway; L-glutamate and succinate from L-arginine: step 4/5. Functionally, catalyzes the NAD-dependent reduction of succinylglutamate semialdehyde into succinylglutamate. The chain is N-succinylglutamate 5-semialdehyde dehydrogenase from Novosphingobium aromaticivorans (strain ATCC 700278 / DSM 12444 / CCUG 56034 / CIP 105152 / NBRC 16084 / F199).